Here is a 985-residue protein sequence, read N- to C-terminus: Ras and Rab interactor 3 (985 aa).

The segment at 1-24 (MIRHAGAPARGDPTGPVPVVGKGE) is disordered. One can recognise an SH2 domain in the interval 63–158 (WLQLSLGQAE…LLPFTLRLPQ (96 aa)). 3 disordered regions span residues 183–202 (SLNPPQERGKPAEPPRDRAP), 251–293 (QPPL…QPCS), and 315–531 (PPVP…KGSL). A compositionally biased stretch (basic and acidic residues) spans 189 to 201 (ERGKPAEPPRDRA). Pro residues-rich tracts occupy residues 278–288 (RRPPPPPPVLP) and 315–336 (PPVPAPHVTPHAPGPPDHPNQP). Residues 424–442 (DTPRESTEQGQDTEVKASD) show a composition bias toward basic and acidic residues. The segment at 587-732 (FSSMFHAFLS…TTTDLGVTTS (146 aa)) is interaction with RAB5B. Residues 703–846 (HSKDGSLQQL…IKSYDKITVT (144 aa)) enclose the VPS9 domain. Positions 877–963 (QDFICVSYLE…RDFHFVYRPL (87 aa)) constitute a Ras-associating domain.

This sequence belongs to the RIN (Ras interaction/interference) family. Interacts with CD2AP, RAB5B, RAB31 and BIN1. As to expression, widely expressed.

The protein resides in the cytoplasm. It localises to the cytoplasmic vesicle. Its subcellular location is the early endosome. Its function is as follows. Ras effector protein that functions as a guanine nucleotide exchange (GEF) for RAB5B and RAB31, by exchanging bound GDP for free GTP. Required for normal RAB31 function. The chain is Ras and Rab interactor 3 (RIN3) from Homo sapiens (Human).